The following is a 119-amino-acid chain: Large ribosomal subunit protein uL24 (119 aa).

This sequence belongs to the universal ribosomal protein uL24 family. As to quaternary structure, part of the 50S ribosomal subunit.

Its function is as follows. One of two assembly initiator proteins, it binds directly to the 5'-end of the 23S rRNA, where it nucleates assembly of the 50S subunit. Functionally, one of the proteins that surrounds the polypeptide exit tunnel on the outside of the subunit. The chain is Large ribosomal subunit protein uL24 from Sulfurihydrogenibium sp. (strain YO3AOP1).